Reading from the N-terminus, the 442-residue chain is Proline--tRNA ligase (442 aa).

It belongs to the class-II aminoacyl-tRNA synthetase family. ProS type 2 subfamily. In terms of assembly, homodimer.

It localises to the cytoplasm. It catalyses the reaction tRNA(Pro) + L-proline + ATP = L-prolyl-tRNA(Pro) + AMP + diphosphate. Functionally, catalyzes the attachment of proline to tRNA(Pro) in a two-step reaction: proline is first activated by ATP to form Pro-AMP and then transferred to the acceptor end of tRNA(Pro). The chain is Proline--tRNA ligase from Brucella canis (strain ATCC 23365 / NCTC 10854 / RM-666).